The chain runs to 267 residues: uncharacterized protein (267 aa).

The region spanning 17–248 (LKVENLTKIF…PRDRTSIEFL (232 aa)) is the ABC transporter domain. 53 to 60 (GPSGCGKT) contributes to the ATP binding site.

The protein belongs to the ABC transporter superfamily.

This is an uncharacterized protein from Methanocaldococcus jannaschii (strain ATCC 43067 / DSM 2661 / JAL-1 / JCM 10045 / NBRC 100440) (Methanococcus jannaschii).